The primary structure comprises 498 residues: Putative antiporter subunit mnhD2 (498 aa).

14 helical membrane passes run 2 to 22, 32 to 52, 78 to 98, 108 to 128, 130 to 150, 161 to 181, 209 to 229, 240 to 260, 271 to 291, 308 to 328, 330 to 350, 369 to 389, 403 to 423, and 451 to 471; these read LSNL…ILVF, YLYL…LIYV, LSLI…AYGF, YHLP…FLTS, LFNL…LITL, IIYV…IGLL, ISLI…FMWL, LAAL…IRFF, IHPL…IGVI, IGFI…GAIF, LVND…LVYI, FGVA…FSGF, GNYI…YSLF, and ILSI…VVLN.

This sequence belongs to the CPA3 antiporters (TC 2.A.63) subunit D family. May form a heterooligomeric complex that consists of seven subunits: mnhA2, mnhB2, mnhC2, mnhD2, mnhE2, mnhF2 and mnhG2.

The protein localises to the cell membrane. This Staphylococcus aureus (strain JH1) protein is Putative antiporter subunit mnhD2 (mnhD2).